The primary structure comprises 1452 residues: ABC-type transporter adrC (1452 aa).

A disordered region spans residues 1 to 38 (MAPEEGDQAMSHEDKAACSSLNTTSSTELFDGAPSSEN). Residues 19–28 (SSLNTTSSTE) are compositionally biased toward polar residues. The ABC transporter 1 domain occupies 116–378 (KRLMSIVGNK…FETMGWKRPP (263 aa)). 6 consecutive transmembrane segments (helical) span residues 487 to 507 (IPALIATAVAQTVVSLIIGSL), 524 to 544 (VLFLAVLTNALISLLEITTLY), 569 to 589 (VIVDFPIKLFRCLLSAIIVYF), 598 to 618 (SHFFIYIMFQLTAVMTMATIF), 631 to 651 (AMALAGVVIICIAVYTGFTVP), and 738 to 758 (GILVAFLVFFYVLYFWLTELI). Residues 813 to 1055 (FSWKGLSYDI…TVLEYLEDKG (243 aa)) form the ABC transporter 2 domain. 849 to 856 (GVSGAGKT) provides a ligand contact to ATP. 7 consecutive transmembrane segments (helical) span residues 1149–1169 (YILAKFGAGVFCGVFIGFSFW), 1181–1201 (VLFSLFLLCTIFSTLVNQIMP), 1224–1244 (VFILCQILVELPWQTLLGICT), 1264–1284 (LVLLFTVQFFIFASTFAQLVV), 1287–1307 (VPSVVLGSMLATFTFLLCLLF), 1322–1344 (IFMNRVSPLTYYVGGISATALHG), and 1415–1435 (FGIFWVYIIFNVIGAVLLYYL).

It belongs to the ABC transporter superfamily. ABCG family. PDR (TC 3.A.1.205) subfamily.

The protein resides in the membrane. Its function is as follows. ABC-type transporter; part of the gene cluster that mediates the biosynthesis of the meroterpenoid compound andrastin A, a promising antitumoral compound. Is required for the production of andrastin A but does not have a significant role in its secretion. The sequence is that of ABC-type transporter adrC from Penicillium roqueforti.